Consider the following 908-residue polypeptide: Translation initiation factor IF-2 (908 aa).

Disordered stretches follow at residues 52 to 229 (QSHG…AEEA) and 241 to 316 (AGQY…SAQH). A compositionally biased stretch (polar residues) spans 65–84 (KSKTTSTARVTGSSGKSKSV). 6 stretches are compositionally biased toward basic and acidic residues: residues 94-108 (FEKP…ELAA), 120-138 (AAKD…EERQ), 176-185 (IEVKPKEQPK), 193-229 (PKVE…AEEA), 270-280 (SFEKERREIKR), and 294-303 (KNQDEREIKN). The region spanning 409 to 578 (TRPPVVTIMG…SLQAELMELE (170 aa)) is the tr-type G domain. The G1 stretch occupies residues 418-425 (GHVDHGKT). 418-425 (GHVDHGKT) lines the GTP pocket. The interval 443 to 447 (GITQH) is G2. The segment at 464–467 (DTPG) is G3. Residues 464–468 (DTPGH) and 518–521 (NKMD) each bind GTP. Residues 518–521 (NKMD) form a G4 region. Residues 554–556 (SAK) are G5.

Belongs to the TRAFAC class translation factor GTPase superfamily. Classic translation factor GTPase family. IF-2 subfamily.

The protein resides in the cytoplasm. In terms of biological role, one of the essential components for the initiation of protein synthesis. Protects formylmethionyl-tRNA from spontaneous hydrolysis and promotes its binding to the 30S ribosomal subunits. Also involved in the hydrolysis of GTP during the formation of the 70S ribosomal complex. This Psychrobacter arcticus (strain DSM 17307 / VKM B-2377 / 273-4) protein is Translation initiation factor IF-2.